The sequence spans 1942 residues: GREB1-like protein (1942 aa).

Disordered regions lie at residues 76 to 101 (SSNSVEDMDDEDDSDTSSPPLPYLQG), 235 to 306 (PFSN…GTKT), 325 to 373 (MDGR…HRSW), and 1123 to 1256 (TKTA…RTQV). Over residues 81 to 90 (EDMDDEDDSD) the composition is skewed to acidic residues. Positions 237–253 (SNSASSSKPSSSSSLSS) are enriched in low complexity. Over residues 338–362 (NPLSTPSHGYRTTETGDSPASTAMS) the composition is skewed to polar residues. Positions 1127 to 1155 (TSREERPREGERSSGETAEHDDLPMELER) are enriched in basic and acidic residues. Residues 1158–1171 (SNASAATRTSGSTT) show a composition bias toward low complexity. Residues 1172-1202 (ENGVSSSSILDKPSSQSDPCGSRTMMDSCSS) are compositionally biased toward polar residues. Residues 1212–1248 (SQAPSSSSTSSFSSASSSSSSSSSPAAQRPSQSTQAP) are compositionally biased toward low complexity. Residues 1861 to 1881 (GVIFSGLLLYLCDSFVVSSLL) form a helical membrane-spanning segment.

This sequence belongs to the GREB1 family.

The protein resides in the membrane. Its function is as follows. Plays a major role in early metanephros development. The protein is GREB1-like protein (greb1l) of Danio rerio (Zebrafish).